Here is a 1157-residue protein sequence, read N- to C-terminus: Probable inactive leucine-rich repeat receptor kinase XIAO (1157 aa).

Positions 1 to 21 are cleaved as a signal peptide; that stretch reads MPPPPRLLFLLVMLLVVAAPG. N-linked (GlcNAc...) asparagine glycosylation occurs at asparagine 58. LRR repeat units lie at residues 101–125, 127–149, 150–172, 173–196, 198–220, 221–245, 247–269, 270–293, 296–319, 320–343, 344–367, 368–391, 393–414, 415–439, 440–463, 464–487, 489–511, 513–536, 537–559, 561–583, 584–608, 609–631, 632–656, 658–680, 681–704, and 706–728; these read LVYLEKLSLRSNSLSGTIPASLSRI, SLRAVYLQYNSLSGPIPQSFLAN, LTNLQTFDVSGNLLSGPVPVSFP, PSLKYLDLSSNAFSGTIPANVSAS, TSLQFLNLSFNRLRGTVPASLGT, LQDLHYLWLDGNLLEGTIPSALSNC, ALLHLSLQGNALRGILPPAVAAI, PSLQILSVSRNRLTGAIPAAAFGG, NSSLRIVQVGGNAFSQVDVPVSLG, KDLQVVDLRANKLAGPFPSWLAGA, GGLTVLDLSGNAFTGEVPPAVGQL, TALQELRLGGNAFTGTVPAEIGRC, ALQVLDLEDNRFSGEVPAALGG, LRRLREVYLGGNSFSGQIPASLGNL, SWLEALSTPGNRLTGDLPSELFVL, GNLTFLDLSDNKLAGEIPPSIGNL, ALQSLNLSGNSFSGRIPSNIGNL, NLRVLDLSGQKNLSGNLPAELFGL, PQLQYVSLAGNSFSGDVPEGFSS, WSLRHLNLSVNSFTGSMPATYGY, LPSLQVLSASHNRICGELPVELANC, SNLTVLDLRSNQLTGPIPGDFAR, LGELEELDLSHNQLSRKIPPEISNC, SLVTLKLDDNHLGGEIPASLSNL, SKLQTLDLSSNNLTGSIPASLAQI, and GMLSLNVSQNELSGEIPAMLGSR. An N-linked (GlcNAc...) asparagine glycan is attached at asparagine 149. N-linked (GlcNAc...) asparagine glycosylation is found at asparagine 192, asparagine 204, and asparagine 244. N-linked (GlcNAc...) asparagine glycosylation occurs at asparagine 296. Residue asparagine 438 is glycosylated (N-linked (GlcNAc...) asparagine). N-linked (GlcNAc...) asparagine glycosylation is found at asparagine 465, asparagine 494, and asparagine 524. 7 N-linked (GlcNAc...) asparagine glycosylation sites follow: asparagine 567, asparagine 607, asparagine 610, asparagine 655, asparagine 679, asparagine 692, and asparagine 711. The helical transmembrane segment at 765 to 785 threads the bilayer; the sequence is LALLIGVVAATVLLLVLFCCC. Positions 804–825 are disordered; it reads VKKRRRSPGRGSGSSGTSTDSV. The 296-residue stretch at 849–1144 folds into the Protein kinase domain; it reads FDEENVLSRG…LEGCRVGPDI (296 aa). Residues 855-863, 930-932, 936-939, 980-985, and aspartate 998 each bind ATP; these read LSRGRHGLV, DYM, NLAT, and DVKPQN.

Belongs to the protein kinase superfamily. Ser/Thr protein kinase family. As to expression, expressed in developing culm, coleoptile, primary root, young spikelet, young leaf blade and leaf sheath, floral meristem primordia, stamen primordia, and lemma and palea primordia.

The protein localises to the cell membrane. Functions in the early stages of organ development by regulating cell division rate. Is probably involved in the regulation of a number of cell-cycle genes. May act as regulator of brassinosteroid (BR) signaling and cell-cycle controlling organ growth. The sequence is that of Probable inactive leucine-rich repeat receptor kinase XIAO from Oryza sativa subsp. japonica (Rice).